Consider the following 626-residue polypeptide: Probable potassium transport system protein Kup (626 aa).

12 helical membrane passes run 11–31, 55–75, 103–123, 140–160, 171–191, 216–236, 250–270, 282–302, 340–360, 369–389, 395–415, and 422–442; these read FLTL…TSPL, LSLI…VFVM, AWII…GMIT, AALS…LFLI, LFGP…FVSL, LGFA…ALYA, WFAV…ALLI, LLVP…ATVI, IYAP…VLAF, AYGL…LVVA, WPGL…LSFL, and LGDG…VMST.

Belongs to the HAK/KUP transporter (TC 2.A.72) family.

The protein localises to the cell inner membrane. It catalyses the reaction K(+)(in) + H(+)(in) = K(+)(out) + H(+)(out). In terms of biological role, transport of potassium into the cell. Likely operates as a K(+):H(+) symporter. The sequence is that of Probable potassium transport system protein Kup from Methylococcus capsulatus (strain ATCC 33009 / NCIMB 11132 / Bath).